The sequence spans 446 residues: Probable glycine dehydrogenase (decarboxylating) subunit 1 (446 aa).

Belongs to the GcvP family. N-terminal subunit subfamily. The glycine cleavage system is composed of four proteins: P, T, L and H. In this organism, the P 'protein' is a heterodimer of two subunits.

The enzyme catalyses N(6)-[(R)-lipoyl]-L-lysyl-[glycine-cleavage complex H protein] + glycine + H(+) = N(6)-[(R)-S(8)-aminomethyldihydrolipoyl]-L-lysyl-[glycine-cleavage complex H protein] + CO2. In terms of biological role, the glycine cleavage system catalyzes the degradation of glycine. The P protein binds the alpha-amino group of glycine through its pyridoxal phosphate cofactor; CO(2) is released and the remaining methylamine moiety is then transferred to the lipoamide cofactor of the H protein. This chain is Probable glycine dehydrogenase (decarboxylating) subunit 1, found in Coxiella burnetii (strain CbuK_Q154) (Coxiella burnetii (strain Q154)).